Here is a 1147-residue protein sequence, read N- to C-terminus: Putative ATP-dependent RNA helicase L377 (1147 aa).

Residues 108–315 (INPNTPYRGL…VELINYLRPK (208 aa)) enclose the Helicase ATP-binding domain. 121 to 128 (WGTGVGKS) is an ATP binding site. The DEAH box signature appears at 264 to 267 (DEAH).

Belongs to the DEAD box helicase family. DEAH subfamily.

It is found in the virion. The catalysed reaction is ATP + H2O = ADP + phosphate + H(+). This chain is Putative ATP-dependent RNA helicase L377, found in Acanthamoeba polyphaga (Amoeba).